The following is a 536-amino-acid chain: Major facilitator superfamily domain-containing protein 4B (536 aa).

12 consecutive transmembrane segments (helical) span residues 19–39 (LTYW…GPTI), 53–73 (ITWV…SGGA), 81–101 (ALLA…IIPL), 105–125 (VLLL…IDTI), 140–160 (IFLQ…PLIA), 211–231 (YAFW…FVLM), 297–317 (FFLI…IMGV), 341–361 (LNCI…PLSY), 366–386 (VHLL…LMIL), 391–411 (VFLF…FPCL), 428–448 (VLVT…GTLI), and 456–476 (FLVC…SVIL).

It belongs to the major facilitator superfamily.

Its subcellular location is the membrane. This Danio rerio (Zebrafish) protein is Major facilitator superfamily domain-containing protein 4B.